The following is a 27-amino-acid chain: Palustrin-1d (27 aa).

Cys-21 and Cys-27 are disulfide-bonded.

As to expression, expressed by the skin glands.

Its subcellular location is the secreted. Its function is as follows. Antimicrobial activity against Gram-negative bacterium E.coli. This chain is Palustrin-1d, found in Lithobates palustris (Pickerel frog).